Consider the following 328-residue polypeptide: Interleukin-12 subunit beta (328 aa).

The first 22 residues, Met1–Ala22, serve as a signal peptide directing secretion. In terms of domain architecture, Ig-like C2-type spans Asp29–Lys106. Cys50 and Cys90 are oxidised to a cystine. Residues Asn125, Asn135, and Asn222 are each glycosylated (N-linked (GlcNAc...) asparagine). The region spanning Pro237–Ser328 is the Fibronectin type-III domain.

This sequence belongs to the IL-12B family. In terms of assembly, heterodimer with IL12A; disulfide-linked. The heterodimer is known as interleukin IL-12. Heterodimer with IL23A; disulfide-linked. The heterodimer is known as interleukin IL-23. Also secreted as a monomer. Interacts with NBR1; this interaction promotes IL-12 secretion.

Its subcellular location is the secreted. Its function is as follows. Cytokine that can act as a growth factor for activated T and NK cells, enhance the lytic activity of NK/lymphokine-activated killer cells, and stimulate the production of IFN-gamma by resting PBMC. Associates with IL23A to form the IL-23 interleukin, a heterodimeric cytokine which functions in innate and adaptive immunity. IL-23 may constitute with IL-17 an acute response to infection in peripheral tissues. IL-23 binds to a heterodimeric receptor complex composed of IL12RB1 and IL23R, activates the Jak-Stat signaling cascade, stimulates memory rather than naive T-cells and promotes production of pro-inflammatory cytokines. IL-23 induces autoimmune inflammation and thus may be responsible for autoimmune inflammatory diseases and may be important for tumorigenesis. The protein is Interleukin-12 subunit beta (IL12B) of Macaca mulatta (Rhesus macaque).